A 975-amino-acid chain; its full sequence is MQSADDKSLLARFFHADRSLTAVASELDSFDGRAEPDRCTRLVSRLRQNQDKVLAITNLIMEELLGEDRDPRAFRAKFPEEVLQENLAGQLWFGAECLAAGSSIMNRESESKEMRPLAQAVTKSLGNVRVLLRDQCLKNNVPNSKTLHLDLNDSTTEQLYESLKIFDRLFAEFELSYVSAMVQVKSRHEYEMQQWIGVLFSETLQRALKIGLLDQEMVDAFDPGLMFSIPRLAIVAGLVVYAKGPLNMDMPGDQLSEMFRPFRTILIKIRDLLRNLNNQELYQLEKLLCTNEDINTKVPLGSSSIEAPSPEHSSHPTTSSTQNNNNSSNNNHSSSSTNTTSTTITTAGTTNTHRTVERLVDQRNNNHNSNSNSSSNPTVEGATLRSPSMLSLSTTSTPTASPTPSPTPSHSIASTSSAATSSTNPPADWSDGDDEDEDDDDIDVDEEDPESSDDGTDEEQLLKDIVAADCASGYLIPNTNLGNLLQPQEVPLTDNFVASEDDEYGTAEQQGHQGLEEEEPSTSAAMLAATRTLQRLRLPSSDNEPLAEPTTIKASEEHMQQPSGRHHRHHQSHHHHHHHRHSHQHQHRQPHPHRTTRSGRKRCSLEAADPETIQPEREQNLASGDTSAASSLSDDVSLAMRNTTARLKFKSTENLLHRLFVCIAGVADQLQTNFASDLRQILRSVFLMNMSAAQEDIDIPEKTKESELFEFRASENDVIQESAGSNQSIYSAEEVNPELDNVFSAGGGNQATGQRHSAGASMQRNNTIDLASQPGEGSPSGATTTTSRSHVTRSRSLGDQEAASSATSSTAQLRQLEQQQQQQQLQIQLQRQRNNSVGSNTPSSASSTSSSSEQNSPVSARSGSRRRLQSNNETQMPSSATSTSATLSPPAWIPDGKAPRCMACQTPFTAFRRRHHCRNCGGVFCGVCSNASAPLPKYGLTKAVRVCRDCYVREVRSGMGVQGVQSVQSVQASAS.

2 disordered regions span residues 299–458 (PLGS…GTDE) and 504–523 (YGTAEQQGHQGLEEEEPSTS). 4 stretches are compositionally biased toward low complexity: residues 302-352 (SSSI…TTNT), 365-376 (NNHNSNSNSSSN), 383-400 (TLRSPSMLSLSTTSTPTA), and 408-429 (PSHSIASTSSAATSSTNPPADW). Acidic residues predominate over residues 430-458 (SDGDDEDEDDDDIDVDEEDPESSDDGTDE). A phosphoserine mark is found at serine 540 and serine 541. Disordered regions lie at residues 556-633 (EEHM…SSLS) and 740-891 (DNVF…SPPA). The segment covering 564 to 602 (GRHHRHHQSHHHHHHHRHSHQHQHRQPHPHRTTRSGRKR) has biased composition (basic residues). Residues 621–633 (LASGDTSAASSLS) show a composition bias toward low complexity. Residues 751–770 (ATGQRHSAGASMQRNNTIDL) are compositionally biased toward polar residues. The residue at position 796 (serine 796) is a Phosphoserine. Composition is skewed to low complexity over residues 802 to 860 (AASS…PVSA) and 877 to 890 (PSSATSTSATLSPP). Residues 895–955 (DGKAPRCMAC…VCRDCYVREV (61 aa)) form an FYVE-type zinc finger. Zn(2+) contacts are provided by cysteine 901, cysteine 904, cysteine 917, cysteine 920, cysteine 925, cysteine 928, cysteine 947, and cysteine 950.

This sequence belongs to the lst-2 family.

In terms of biological role, negative regulator of epidermal growth factor receptor (EGFR) signaling. The protein is Lateral signaling target protein 2 homolog of Drosophila sechellia (Fruit fly).